An 89-amino-acid polypeptide reads, in one-letter code: MSITPERKAQLIKEFAGKDGDTGSPEVQVAILTERIVNLTEHFRGHAKDNHSRRGLLKMVSQRRSLLDYVKKKDQARYEKLISRLGIRR.

This sequence belongs to the universal ribosomal protein uS15 family. Part of the 30S ribosomal subunit. Forms a bridge to the 50S subunit in the 70S ribosome, contacting the 23S rRNA.

Its function is as follows. One of the primary rRNA binding proteins, it binds directly to 16S rRNA where it helps nucleate assembly of the platform of the 30S subunit by binding and bridging several RNA helices of the 16S rRNA. Forms an intersubunit bridge (bridge B4) with the 23S rRNA of the 50S subunit in the ribosome. The polypeptide is Small ribosomal subunit protein uS15 (Parvibaculum lavamentivorans (strain DS-1 / DSM 13023 / NCIMB 13966)).